The following is a 498-amino-acid chain: Trichoplein keratin filament-binding protein (498 aa).

The stretch at 11-39 forms a coiled coil; it reads CSQQRLNQQLARQREQEARLRQQWEQNSR. Residues Lys-50 and Lys-57 each participate in a glycyl lysine isopeptide (Lys-Gly) (interchain with G-Cter in ubiquitin) cross-link. 3 coiled-coil regions span residues 66–136, 163–353, and 380–479; these read AYQR…LIAE, VNSW…LREE, and LTGR…EAET. The segment at 73–498 is interaction with keratin proteins; that stretch reads KEEKRRSLEA…PYGHPKIAWN (426 aa). Positions 167 to 189 are disordered; sequence EMQKEEKKQQEATAEQENKRYEN. Basic and acidic residues predominate over residues 168–189; that stretch reads MQKEEKKQQEATAEQENKRYEN. Residues 259–425 are trichohyalin/plectin homology domain; that stretch reads KQMEAFRQKA…RELARREKEE (167 aa). The disordered stretch occupies residues 447–498; that stretch reads QAWEADQQEEEEEEEARRVEQLSDALLQQEAETMAEQGYRPKPYGHPKIAWN.

The protein belongs to the TCHP family. Interacts specifically with keratin proteins including, KRT5, KRT6A, KRT8, KRT14, KRT16 and KRT18. Interacts with KCTD17. Ubiquitinated. Ubiquitination by the BCR(KCTD17) E3 ubiquitin ligase complex results in proteasomal degradation, and induces ciliogenesis. Expressed at high levels in normal urothelial and breast epithelial cells. Also expressed in the smooth muscle and endothelial cells. Reduced expression seen in advanced bladder and breast carcinomas (at protein level). Ubiquitous. Expressed at highest levels in the heart, skeletal muscle, kidney, liver and testis.

The protein localises to the cytoplasm. Its subcellular location is the cytoskeleton. It is found in the cell membrane. It localises to the mitochondrion. The protein resides in the cell junction. The protein localises to the desmosome. Its subcellular location is the microtubule organizing center. It is found in the centrosome. Functionally, tumor suppressor which has the ability to inhibit cell growth and be pro-apoptotic during cell stress. Inhibits cell growth in bladder and prostate cancer cells by a down-regulation of HSPB1 by inhibiting its phosphorylation. May act as a 'capping' or 'branching' protein for keratin filaments in the cell periphery. May regulate K8/K18 filament and desmosome organization mainly at the apical or peripheral regions of simple epithelial cells. Is a negative regulator of ciliogenesis. The sequence is that of Trichoplein keratin filament-binding protein from Homo sapiens (Human).